The sequence spans 274 residues: Rhamnulose-1-phosphate aldolase (274 aa).

Glutamate 117 is an active-site residue. 3 residues coordinate Zn(2+): histidine 141, histidine 143, and histidine 212.

This sequence belongs to the aldolase class II family. RhaD subfamily. As to quaternary structure, homotetramer. It depends on Zn(2+) as a cofactor.

The protein localises to the cytoplasm. It catalyses the reaction L-rhamnulose 1-phosphate = (S)-lactaldehyde + dihydroxyacetone phosphate. The protein operates within carbohydrate degradation; L-rhamnose degradation; glycerone phosphate from L-rhamnose: step 3/3. Its function is as follows. Catalyzes the reversible cleavage of L-rhamnulose-1-phosphate to dihydroxyacetone phosphate (DHAP) and L-lactaldehyde. The sequence is that of Rhamnulose-1-phosphate aldolase from Yersinia pseudotuberculosis serotype IB (strain PB1/+).